The chain runs to 203 residues: Ribonuclease T (203 aa).

Residues 11–185 enclose the Exonuclease domain; that stretch reads VVVDVETGGF…YDTEKTAELF (175 aa). Residues D14, E16, H172, and D177 each coordinate Mg(2+). H172 (proton donor/acceptor) is an active-site residue.

This sequence belongs to the RNase T family. In terms of assembly, homodimer. Requires Mg(2+) as cofactor.

Functionally, trims short 3' overhangs of a variety of RNA species, leaving a one or two nucleotide 3' overhang. Responsible for the end-turnover of tRNA: specifically removes the terminal AMP residue from uncharged tRNA (tRNA-C-C-A). Also appears to be involved in tRNA biosynthesis. This is Ribonuclease T from Pseudomonas putida (strain ATCC 47054 / DSM 6125 / CFBP 8728 / NCIMB 11950 / KT2440).